The sequence spans 340 residues: tRNA N6-adenosine threonylcarbamoyltransferase (340 aa).

Fe cation is bound by residues His-109 and His-113. Substrate contacts are provided by residues 132–136 (AISGA), Asp-165, Gly-178, and Asn-277. Asp-302 provides a ligand contact to Fe cation.

The protein belongs to the KAE1 / TsaD family. Fe(2+) serves as cofactor.

It is found in the cytoplasm. It catalyses the reaction L-threonylcarbamoyladenylate + adenosine(37) in tRNA = N(6)-L-threonylcarbamoyladenosine(37) in tRNA + AMP + H(+). Required for the formation of a threonylcarbamoyl group on adenosine at position 37 (t(6)A37) in tRNAs that read codons beginning with adenine. Is involved in the transfer of the threonylcarbamoyl moiety of threonylcarbamoyl-AMP (TC-AMP) to the N6 group of A37, together with TsaE and TsaB. TsaD likely plays a direct catalytic role in this reaction. This is tRNA N6-adenosine threonylcarbamoyltransferase from Chlamydia muridarum (strain MoPn / Nigg).